We begin with the raw amino-acid sequence, 386 residues long: Nucleosome assembly protein 1-like 4 (386 aa).

The disordered stretch occupies residues 1–28 (MAENSLSDGGPADSVEAAKNASNTEKLT). Ala2 carries the N-acetylalanine modification. Residues Ser5, Ser7, and Ser49 each carry the phosphoserine modification. Phosphothreonine is present on Thr51. Ser53 and Ser54 each carry phosphoserine. Thr58 bears the Phosphothreonine mark. The residue at position 105 (Lys105) is an N6-acetyllysine. Position 125 is a phosphoserine (Ser125). At Lys146 the chain carries N6-acetyllysine. Residues 265-271 (IKKKQKH) carry the Nuclear localization signal motif. At Ser304 the chain carries Phosphoserine. The segment covering 339 to 370 (AIEDDDNFEEGEEGEEEELEGDEEGEDEDDAD) has biased composition (acidic residues). The tract at residues 339–386 (AIEDDDNFEEGEEGEEEELEGDEEGEDEDDADVNPKKEPIQPAECKQQ) is disordered.

The protein belongs to the nucleosome assembly protein (NAP) family. Interacts with core (H2A, H2B, H3, H4) and linker (H1) histones. In terms of processing, polyglutamylated and polyglycylated. These 2 modifications occur exclusively on glutamate residues and result in either polyglutamate or polyglycine chains on the gamma-carboxyl group. Both modifications can coexist on the same protein on adjacent residues, and lowering polyglycylation levels increases polyglutamylation, and reciprocally. Polyglutamylated by TTLL4. Post-translationally, phosphorylated at the G0/G1 boundary but it is not phosphorylated in S-phase. Phosphorylated protein remains in the cytoplasm in a complex with histones during the G0/G1 transition, whereas dephosphorylation triggers its transport into the nucleus at the G1/S-boundary.

Its subcellular location is the nucleus. The protein localises to the cytoplasm. In terms of biological role, acts as a histone chaperone in nucleosome assembly. This is Nucleosome assembly protein 1-like 4 (Nap1l4) from Rattus norvegicus (Rat).